The primary structure comprises 1848 residues: Histone-lysine N-methyltransferase, H3 lysine-79 specific (1848 aa).

The DOT1 domain maps to 19–336 (DVISFAWPLQ…ILERYFQRLK (318 aa)). S-adenosyl-L-methionine-binding positions include 142–145 (YGET), 165–174 (FIDLGSGVGQ), glutamate 192, and 228–229 (DF). 14 disordered regions span residues 338–537 (KGGN…TRKA), 558–593 (AVSV…ARGR), 886–908 (LNSV…WPEV), 960–996 (PPPA…QMTL), 1033–1075 (LNED…AQSL), 1165–1190 (HMAS…RSSV), 1221–1333 (QRQQ…TQVS), 1345–1374 (QEKL…KTIG), 1432–1463 (VHVR…GGAA), 1486–1508 (ARAN…GRDY), 1529–1559 (EQQQ…PPLE), 1573–1604 (KYKE…LPTH), 1637–1713 (SPLA…VDPP), and 1731–1757 (QLSH…LQLT). Basic and acidic residues predominate over residues 339–360 (GGNDHESVGTVRTTRDRAKREA). Residues 364-373 (QHHHNNHHSN) show a composition bias toward basic residues. Residues 391–405 (ATATAAHQQRHQSQS) are compositionally biased toward low complexity. The segment covering 419-428 (SGQQAASKTR) has biased composition (polar residues). 2 stretches are compositionally biased toward low complexity: residues 429–439 (QQLQHQHNQQQ) and 453–474 (DATN…ASNG). 3 positions are modified to phosphoserine: serine 491, serine 492, and serine 494. The segment covering 507 to 518 (GSNGGSIGGGSV) has biased composition (gly residues). Composition is skewed to basic residues over residues 526 to 535 (TQKKRKKLTR) and 582 to 593 (RKGRMKKGARGR). A compositionally biased stretch (low complexity) spans 1221-1235 (QRQQMRVEEQQQQQQ). Residues 1236-1263 (HQHHHHHHHHHPQHRLPQHVQHQHPHQH) show a composition bias toward basic residues. The segment covering 1289-1300 (EPPQTQPLELLP) has biased composition (low complexity). 3 positions are modified to phosphoserine: serine 1318, serine 1324, and serine 1325. A compositionally biased stretch (low complexity) spans 1532–1545 (QKQSKGAGSAGSSS). Over residues 1574-1583 (YKEETEERQR) the composition is skewed to basic and acidic residues. Low complexity-rich tracts occupy residues 1585 to 1598 (AAAA…PPAG) and 1681 to 1696 (HDAT…SSSS). Residues 1697-1706 (CGRRSNSNNG) show a composition bias toward polar residues.

Belongs to the class I-like SAM-binding methyltransferase superfamily. DOT1 family. As to expression, broadly expressed in most tissues. Expressed in a large subset of neurons and in a small subset of glial cells.

Its subcellular location is the nucleus. It carries out the reaction L-lysyl(79)-[histone H3] + 3 S-adenosyl-L-methionine = N(6),N(6),N(6)-trimethyl-L-lysyl(79)-[histone H3] + 3 S-adenosyl-L-homocysteine + 3 H(+). In terms of biological role, histone methyltransferase. Methylates 'Lys-79' of histone H3. Required for Polycomb Group (PcG) and trithorax Group (trxG) maintenance of expression. Also involved in telomeric silencing but do not in centric heterochromatin. Probably participates in pairing sensitivity. The protein is Histone-lysine N-methyltransferase, H3 lysine-79 specific (gpp) of Drosophila melanogaster (Fruit fly).